The chain runs to 349 residues: UDP-3-O-acylglucosamine N-acyltransferase (349 aa).

His-242 (proton acceptor) is an active-site residue.

The protein belongs to the transferase hexapeptide repeat family. LpxD subfamily. Homotrimer.

The enzyme catalyses a UDP-3-O-[(3R)-3-hydroxyacyl]-alpha-D-glucosamine + a (3R)-hydroxyacyl-[ACP] = a UDP-2-N,3-O-bis[(3R)-3-hydroxyacyl]-alpha-D-glucosamine + holo-[ACP] + H(+). The protein operates within bacterial outer membrane biogenesis; LPS lipid A biosynthesis. Catalyzes the N-acylation of UDP-3-O-acylglucosamine using 3-hydroxyacyl-ACP as the acyl donor. Is involved in the biosynthesis of lipid A, a phosphorylated glycolipid that anchors the lipopolysaccharide to the outer membrane of the cell. This is UDP-3-O-acylglucosamine N-acyltransferase from Cytophaga hutchinsonii (strain ATCC 33406 / DSM 1761 / CIP 103989 / NBRC 15051 / NCIMB 9469 / D465).